Reading from the N-terminus, the 95-residue chain is uncharacterized protein (95 aa).

A signal peptide (or 21) is located at residues 1–24 (MKKLATLTALAGALTMAVATAAQA). Positions 55 to 89 (EGKCGADKAKSAEGKCGEGKCGADKAKSAEGKCGE) are enriched in basic and acidic residues. The disordered stretch occupies residues 55–95 (EGKCGADKAKSAEGKCGEGKCGADKAKSAEGKCGEGKCGSK).

This is an uncharacterized protein from Haemophilus influenzae (strain ATCC 51907 / DSM 11121 / KW20 / Rd).